Reading from the N-terminus, the 500-residue chain is Glucose-1-phosphate adenylyltransferase small subunit 1, chloroplastic/amyloplastic (500 aa).

Residues Met-1 to Arg-50 constitute a chloroplast transit peptide.

Belongs to the bacterial/plant glucose-1-phosphate adenylyltransferase family. Heterotetramer composed of two small and two large subunits. In terms of tissue distribution, expressed in leaves.

Its subcellular location is the plastid. It localises to the chloroplast. The protein localises to the amyloplast. It catalyses the reaction alpha-D-glucose 1-phosphate + ATP + H(+) = ADP-alpha-D-glucose + diphosphate. The protein operates within glycan biosynthesis; starch biosynthesis. Its activity is regulated as follows. Activated by 3'phosphoglycerate, inhibited by orthophosphate. Allosteric regulation. In terms of biological role, involved in synthesis of starch. Catalyzes the synthesis of ADP-glucose, a molecule that serves as an activated glycosyl donor for alpha-1,4-glucan synthesis. Essential for starch synthesis in leaf chloroplasts and endosperm amyloplasts. This chain is Glucose-1-phosphate adenylyltransferase small subunit 1, chloroplastic/amyloplastic, found in Oryza sativa subsp. japonica (Rice).